The following is an 834-amino-acid chain: Periplasmic nitrate reductase (834 aa).

Positions 1 to 32 (MTEPKIDRRQLLKLEAAAIAAAAAGMPTVARA) form a signal peptide, tat-type signal. One can recognise a 4Fe-4S Mo/W bis-MGD-type domain in the interval 44 to 100 (LKWDKAACRFCGTGCSVMVATKDNRVVATHGDIKAEVNRGLNCVKGYFLSKIMYGHD). 4 residues coordinate [4Fe-4S] cluster: cysteine 51, cysteine 54, cysteine 58, and cysteine 86. Mo-bis(molybdopterin guanine dinucleotide) contacts are provided by residues lysine 88, glutamine 155, asparagine 180, cysteine 184, 217–224 (WGSNMAEM), 248–252 (STFEH), 267–269 (QTD), methionine 378, glutamine 382, asparagine 488, 514–515 (SD), lysine 537, aspartate 564, and 724–733 (TGRVVEHWHS). Tryptophan 800 is a substrate binding site. Residues asparagine 808 and lysine 825 each coordinate Mo-bis(molybdopterin guanine dinucleotide).

This sequence belongs to the prokaryotic molybdopterin-containing oxidoreductase family. NasA/NapA/NarB subfamily. As to quaternary structure, component of the periplasmic nitrate reductase NapAB complex composed of NapA and NapB. Requires [4Fe-4S] cluster as cofactor. It depends on Mo-bis(molybdopterin guanine dinucleotide) as a cofactor. Post-translationally, predicted to be exported by the Tat system. The position of the signal peptide cleavage has not been experimentally proven.

The protein localises to the periplasm. The enzyme catalyses 2 Fe(II)-[cytochrome] + nitrate + 2 H(+) = 2 Fe(III)-[cytochrome] + nitrite + H2O. Functionally, catalytic subunit of the periplasmic nitrate reductase complex NapAB. Receives electrons from NapB and catalyzes the reduction of nitrate to nitrite. This chain is Periplasmic nitrate reductase, found in Bradyrhizobium sp. (strain ORS 278).